A 188-amino-acid chain; its full sequence is Putative pre-16S rRNA nuclease (188 aa).

The interval 156–188 is disordered; that stretch reads LRQGDAAPGGSDDERDEDGDTDGEDGGGDGGGE. Residues 166–188 show a composition bias toward acidic residues; that stretch reads SDDERDEDGDTDGEDGGGDGGGE.

The protein belongs to the YqgF nuclease family.

The protein resides in the cytoplasm. Functionally, could be a nuclease involved in processing of the 5'-end of pre-16S rRNA. This chain is Putative pre-16S rRNA nuclease, found in Rhodospirillum centenum (strain ATCC 51521 / SW).